The sequence spans 313 residues: MNVGIKGFGAYAPEKIIDNAYFEQFLDTSDEWISKMTGIKERHWADDDQDTSDLAYEASVKAIADAGIQPEDIDMIIVATATGDMPFPTVANMLQERLGTGKVASMDQLAACSGFMYSMITAKQYVQSGDYHNILVVGADKLSKITDLTDRSTAVLFGDGAGAVIIGEVSEGRGIISYEMGSDGTGGKHLYLDKDTGKLKMNGREVFKFAVRIMGDASTRVVEKANLTSDDIDLFIPHQANIRIMESARERLGISKDKMSVSVNKYGNTSAASIPLSIDQELKNGKLKDDDTIVLVGFGGGLTWGAMTIKWGK.

Residues C112 and H238 contribute to the active site. Residues 239-243 (QANIR) are ACP-binding. N268 is an active-site residue.

The protein belongs to the thiolase-like superfamily. FabH family. As to quaternary structure, homodimer.

Its subcellular location is the cytoplasm. It carries out the reaction malonyl-[ACP] + acetyl-CoA + H(+) = 3-oxobutanoyl-[ACP] + CO2 + CoA. The protein operates within lipid metabolism; fatty acid biosynthesis. Its function is as follows. Catalyzes the condensation reaction of fatty acid synthesis by the addition to an acyl acceptor of two carbons from malonyl-ACP. Catalyzes the first condensation reaction which initiates fatty acid synthesis and may therefore play a role in governing the total rate of fatty acid production. Possesses both acetoacetyl-ACP synthase and acetyl transacylase activities. Its substrate specificity determines the biosynthesis of branched-chain and/or straight-chain of fatty acids. In Staphylococcus aureus (strain bovine RF122 / ET3-1), this protein is Beta-ketoacyl-[acyl-carrier-protein] synthase III.